A 160-amino-acid polypeptide reads, in one-letter code: Major pollen allergen Car b 1 isoform 2 (160 aa).

Belongs to the BetVI family.

The protein is Major pollen allergen Car b 1 isoform 2 of Carpinus betulus (European hornbeam).